Here is a 72-residue protein sequence, read N- to C-terminus: Crustacean hyperglycemic hormone B (72 aa).

Glutamine 1 carries the post-translational modification Pyrrolidone carboxylic acid. A D-phenylalanine; in form CHHB-II modification is found at phenylalanine 3. 3 disulfide bridges follow: cysteine 7–cysteine 43, cysteine 23–cysteine 39, and cysteine 26–cysteine 52. A Valine amide modification is found at valine 72.

In terms of processing, stereoinversion of L-Phe (in CHHB-I) to D-Phe (in CHHB-II).

It localises to the secreted. Functionally, hormone found in the sinus gland of isopods and decapods which controls the blood sugar level. Has a secretagogue action over the amylase released from the midgut gland. May act as a stress hormone and may be involved in the control of molting and reproduction. This Cherax destructor (Common yabby crayfish) protein is Crustacean hyperglycemic hormone B.